The sequence spans 378 residues: Dihydroorotate dehydrogenase (quinone) (378 aa).

FMN is bound by residues 77 to 81 (AGFDK) and Thr-101. Lys-81 is a binding site for substrate. 126–130 (NRMGF) is a binding site for substrate. 2 residues coordinate FMN: Asn-158 and Asn-191. Asn-191 serves as a coordination point for substrate. The active-site Nucleophile is Ser-194. Residue Asn-196 participates in substrate binding. 2 residues coordinate FMN: Lys-229 and Thr-257. 258–259 (NT) provides a ligand contact to substrate. FMN-binding positions include Gly-287, Gly-316, and 337 to 338 (YT).

The protein belongs to the dihydroorotate dehydrogenase family. Type 2 subfamily. Monomer. FMN serves as cofactor.

The protein resides in the cell membrane. The enzyme catalyses (S)-dihydroorotate + a quinone = orotate + a quinol. The protein operates within pyrimidine metabolism; UMP biosynthesis via de novo pathway; orotate from (S)-dihydroorotate (quinone route): step 1/1. Catalyzes the conversion of dihydroorotate to orotate with quinone as electron acceptor. This chain is Dihydroorotate dehydrogenase (quinone), found in Synechococcus sp. (strain ATCC 27144 / PCC 6301 / SAUG 1402/1) (Anacystis nidulans).